The chain runs to 329 residues: MGQLQKAKINQTQKAIVEIKNRFQKYFAKNLNLSRVTAPLFVEGQSGLNDHLDHKQKAVSFYAKKLNKTLEIVQSLAKWKRLALLDYGFSLYEGLYTDMNAIRADDDIDEIHSIYVDQWDWEILINKQDCTLDFLKSIVNKIYSTIKTVQLEIDQLYNPKQIILPDSITFIGSQELEDLYPHLTPSQREYEFAKMHQAIFIYQIGYPLKSGYIQSIRSPEYDNWNLNGDLIVYHKLNDQAIELSSMGIRVSKQDFIKQTNFANLKNDQENNFYHQMILNDQLPQTIGGGIGQSRLCMFLLNKKHIGEVQVSVWPNEYKDELLKKGIKLL.

This sequence belongs to the class-II aminoacyl-tRNA synthetase family. AsnA subfamily.

The protein localises to the cytoplasm. It carries out the reaction L-aspartate + NH4(+) + ATP = L-asparagine + AMP + diphosphate + H(+). It functions in the pathway amino-acid biosynthesis; L-asparagine biosynthesis; L-asparagine from L-aspartate (ammonia route): step 1/1. In Ureaplasma urealyticum serovar 10 (strain ATCC 33699 / Western), this protein is Aspartate--ammonia ligase.